A 122-amino-acid polypeptide reads, in one-letter code: Large ribosomal subunit protein uL14 (122 aa).

Belongs to the universal ribosomal protein uL14 family. As to quaternary structure, part of the 50S ribosomal subunit. Forms a cluster with proteins L3 and L19. In the 70S ribosome, L14 and L19 interact and together make contacts with the 16S rRNA in bridges B5 and B8.

Functionally, binds to 23S rRNA. Forms part of two intersubunit bridges in the 70S ribosome. The polypeptide is Large ribosomal subunit protein uL14 (Shewanella woodyi (strain ATCC 51908 / MS32)).